A 212-amino-acid chain; its full sequence is Neuroendocrine protein 7B2 (212 aa).

The signal sequence occupies residues 1–26; that stretch reads MVSRMVSTMLSGLLFWLASGWTPAFA. Cys120 and Cys130 form a disulfide bridge. Residues Ser141 and Ser205 each carry the phosphoserine modification. The segment at 174–212 is disordered; the sequence is GGERRKRRSVNPYLQGQRLDNVVAKKSVPHFSDEDKDPE.

Belongs to the 7B2 family. Interacts with PCSK2/PC2 early in the secretory pathway. Dissociation occurs at later stages. Proteolytically cleaved in the Golgi by a furin-like convertase to generate bioactive peptides. In terms of processing, sulfated on tyrosine residues.

It is found in the secreted. Acts as a molecular chaperone for PCSK2/PC2, preventing its premature activation in the regulated secretory pathway. Binds to inactive PCSK2 in the endoplasmic reticulum and facilitates its transport from there to later compartments of the secretory pathway where it is proteolytically matured and activated. Also required for cleavage of PCSK2 but does not appear to be involved in its folding. Plays a role in regulating pituitary hormone secretion. The C-terminal peptide inhibits PCSK2 in vitro. This Homo sapiens (Human) protein is Neuroendocrine protein 7B2 (SCG5).